A 138-amino-acid polypeptide reads, in one-letter code: uncharacterized protein (138 aa).

3 helical membrane passes run Ile-17–Phe-37, Phe-43–Cys-63, and Phe-117–Leu-137.

The protein localises to the cell membrane. This is an uncharacterized protein from Mycoplasma genitalium (strain ATCC 33530 / DSM 19775 / NCTC 10195 / G37) (Mycoplasmoides genitalium).